The chain runs to 151 residues: Small ribosomal subunit protein uS15 (151 aa).

It belongs to the universal ribosomal protein uS15 family.

This is Small ribosomal subunit protein uS15 (RpS13) from Plutella xylostella (Diamondback moth).